The chain runs to 424 residues: GTPase Obg (424 aa).

The region spanning 1 to 158 is the Obg domain; sequence MFIDTAKILV…RMINLEIKLL (158 aa). The OBG-type G domain occupies 159-331; it reads ADVGLIGFPN…LIKEVTRQLS (173 aa). Residues 165–172, 190–194, 212–215, 282–285, and 312–314 each bind GTP; these read GFPNVGKS, FTTLK, DIPG, NKID, and SAA. Residues S172 and T192 each coordinate Mg(2+). In terms of domain architecture, OCT spans 345–424; that stretch reads RFMPEEKRFT…LNDFEFDFLL (80 aa).

Belongs to the TRAFAC class OBG-HflX-like GTPase superfamily. OBG GTPase family. Monomer. Requires Mg(2+) as cofactor.

Its subcellular location is the cytoplasm. An essential GTPase which binds GTP, GDP and possibly (p)ppGpp with moderate affinity, with high nucleotide exchange rates and a fairly low GTP hydrolysis rate. Plays a role in control of the cell cycle, stress response, ribosome biogenesis and in those bacteria that undergo differentiation, in morphogenesis control. The polypeptide is GTPase Obg (Clostridium novyi (strain NT)).